The primary structure comprises 362 residues: Class I histocompatibility antigen, Gogo-B*0102 alpha chain (362 aa).

The signal sequence occupies residues 1 to 24 (MRVTAPRTLLLLLSAALALTETWA). The interval 25-114 (GSHSMRYFDT…ALRYYNQSEA (90 aa)) is alpha-1. The Extracellular portion of the chain corresponds to 25 to 308 (GSHSMRYFDT…EPSSQSTIPI (284 aa)). A glycan (N-linked (GlcNAc...) asparagine) is linked at N110. The interval 115-206 (GSHTFQRMFG…ENGRETLQRA (92 aa)) is alpha-2. 2 disulfides stabilise this stretch: C125–C188 and C227–C283. Positions 207–298 (DTPKTHVTHH…GLPKPLTLRW (92 aa)) are alpha-3. Positions 209–295 (PKTHVTHHPI…QHEGLPKPLT (87 aa)) constitute an Ig-like C1-type domain. Residues 299–308 (EPSSQSTIPI) are connecting peptide. The chain crosses the membrane as a helical span at residues 309 to 332 (VGIVAGLAVLAVVVIGAVVTAVIC). Residues 333–362 (RRKSSGGKGGSYSQAASSDSAQGSDVSLTA) lie on the Cytoplasmic side of the membrane. A disordered region spans residues 335 to 362 (KSSGGKGGSYSQAASSDSAQGSDVSLTA). The span at 343–362 (SYSQAASSDSAQGSDVSLTA) shows a compositional bias: low complexity.

The protein belongs to the MHC class I family. In terms of assembly, heterodimer of an alpha chain and a beta chain (beta-2-microglobulin).

Its subcellular location is the membrane. Involved in the presentation of foreign antigens to the immune system. This chain is Class I histocompatibility antigen, Gogo-B*0102 alpha chain, found in Gorilla gorilla gorilla (Western lowland gorilla).